A 267-amino-acid polypeptide reads, in one-letter code: Membrane-spanning 4-domains subfamily A member 12 (267 aa).

Over 1-91 (MMSSKPTSHA…MNFKEEAKAL (91 aa)) the chain is Cytoplasmic. A helical transmembrane segment spans residues 92-112 (GVIQIMVGLMHIGFGIVLCLI). The Extracellular portion of the chain corresponds to 113–120 (SFSFREVL). Residues 121 to 141 (GFASTAVIGGYPFWGGLSFII) form a helical membrane-spanning segment. Residues 142-160 (SGSLSVSASKELSRCLVKG) are Cytoplasmic-facing. The helical transmembrane segment at 161 to 181 (SLGMNIVSSILAFIGVILLLV) threads the bilayer. Over 182–200 (DMCINGVAGQDYWAVLSGK) the chain is Extracellular. The chain crosses the membrane as a helical span at residues 201-221 (GISATLMIFSLLEFFVACATA). Residues 222-267 (HFANQANTTTNMSVLVIPNMYESNPVTPASSSAPPRCNNYSANAPK) are Cytoplasmic-facing. The interval 248 to 267 (TPASSSAPPRCNNYSANAPK) is disordered.

The protein belongs to the MS4A family.

It is found in the membrane. May be involved in signal transduction as a component of a multimeric receptor complex. The chain is Membrane-spanning 4-domains subfamily A member 12 (MS4A12) from Homo sapiens (Human).